A 571-amino-acid chain; its full sequence is Urease subunit alpha (571 aa).

Residues 133 to 571 (GGIDTHVHFI…LPLTQRYFLF (439 aa)) enclose the Urease domain. Positions 138, 140, and 221 each coordinate Ni(2+). Residue K221 is modified to N6-carboxylysine. Residue H223 participates in substrate binding. Residues H250 and H276 each coordinate Ni(2+). H324 (proton donor) is an active-site residue. Position 364 (D364) interacts with Ni(2+).

The protein belongs to the metallo-dependent hydrolases superfamily. Urease alpha subunit family. Heterotrimer of UreA (gamma), UreB (beta) and UreC (alpha) subunits. Three heterotrimers associate to form the active enzyme. Ni cation serves as cofactor. Post-translationally, carboxylation allows a single lysine to coordinate two nickel ions.

It localises to the cytoplasm. It catalyses the reaction urea + 2 H2O + H(+) = hydrogencarbonate + 2 NH4(+). It functions in the pathway nitrogen metabolism; urea degradation; CO(2) and NH(3) from urea (urease route): step 1/1. The polypeptide is Urease subunit alpha (Staphylococcus saprophyticus subsp. saprophyticus (strain ATCC 15305 / DSM 20229 / NCIMB 8711 / NCTC 7292 / S-41)).